We begin with the raw amino-acid sequence, 110 residues long: HTH-type transcriptional regulator TnrA (110 aa).

The HTH merR-type domain maps to 13 to 81 (VISIGIVSEL…TAEILKDMRK (69 aa)). Positions 16-35 (IGIVSELTGLSVRQIRYYEE) form a DNA-binding region, H-T-H motif.

In terms of assembly, homodimer. Under conditions of nitrogen excess, TnrA forms a stable complex with feedback-inhibited GlnA. Interacts with GlnK-AmtB complex.

The protein resides in the cell membrane. With respect to regulation, under conditions of nitrogen excess, the DNA-binding activity is inhibited by the formation of a stable complex with feedback-inhibited GlnA. The presence of glutamine and AMP increases the inhibitory activity of glutamine synthetase by more than 1000-fold. In terms of biological role, transcription regulator that actives the transcription of genes required for nitrogen assimilation such as nrgAB (ammonium transport), nasABCDEF (nitrate/nitrite assimilation), ureABC (urea degradation) and gabP (GABA transport), during nitrogen limitation. Also represses glnRA and gltAB in the absence of ammonium. On the contrary of the MerR members, which require longer DNA sites for high-affinity binding, TnrA requires a DNA sequence of 17 nucleotides as minimal binding site. This Bacillus subtilis (strain 168) protein is HTH-type transcriptional regulator TnrA.